The chain runs to 145 residues: Maximins 3/H3 type 1 (145 aa).

Residues 1-18 (MNFKYIVAVSFLIASAYA) form the signal peptide. Propeptides lie at residues 19-43 (RSVQ…LREI) and 74-124 (RIAE…KEKR). At I144 the chain carries Isoleucine amide.

The protein belongs to the bombinin family. In terms of tissue distribution, expressed by the skin glands.

It localises to the secreted. Its function is as follows. Maximin-3 shows antibacterial activity against both Gram-positive and Gram-negative bacteria. It also shows antimicrobial activity against the fungus C.albicans, but not against A.flavus nor P.uticale. It has little hemolytic activity. It possess a significant cytotoxicity against tumor cell lines. It possess a significant anti-HIV activity. It shows high spermicidal activity. In terms of biological role, maximin-H3 shows antibacterial activity against both Gram-positive and Gram-negative bacteria. It also shows antimicrobial activity against the fungus C.albicans. Shows strong hemolytic activity. The protein is Maximins 3/H3 type 1 of Bombina maxima (Giant fire-bellied toad).